A 300-amino-acid polypeptide reads, in one-letter code: N-carbamoylputrescine amidase (300 aa).

Residues 8–266 enclose the CN hydrolase domain; sequence VTVAALQFAC…EAVLVAQFDL (259 aa). The active-site Proton acceptor is glutamate 47. The Proton donor role is filled by lysine 120. Cysteine 157 functions as the Nucleophile in the catalytic mechanism.

This sequence belongs to the carbon-nitrogen hydrolase superfamily. Homooctamer.

It catalyses the reaction N-carbamoylputrescine + H2O + 2 H(+) = putrescine + NH4(+) + CO2. Its pathway is amine and polyamine biosynthesis; putrescine biosynthesis via agmatine pathway; putrescine from N-carbamoylputrescine (amidase route): step 1/1. Involved in polyamine biosynthesis. The polypeptide is N-carbamoylputrescine amidase (CPA) (Solanum lycopersicum (Tomato)).